The following is an 855-amino-acid chain: DNA mismatch repair protein MutS (855 aa).

621-628 (GPNMGGKS) lines the ATP pocket.

Belongs to the DNA mismatch repair MutS family.

In terms of biological role, this protein is involved in the repair of mismatches in DNA. It is possible that it carries out the mismatch recognition step. This protein has a weak ATPase activity. The chain is DNA mismatch repair protein MutS from Francisella tularensis subsp. holarctica (strain OSU18).